Here is a 124-residue protein sequence, read N- to C-terminus: Superoxide reductase (124 aa).

The Fe cation site is built by glutamate 14, histidine 16, histidine 41, histidine 47, cysteine 111, and histidine 114.

The protein belongs to the desulfoferrodoxin family. In terms of assembly, homotetramer. Fe cation serves as cofactor.

The catalysed reaction is reduced [rubredoxin] + superoxide + 2 H(+) = oxidized [rubredoxin] + H2O2. In terms of biological role, uses electrons from reduced NADP, by way of rubredoxin and an oxidoreductase, to catalyze the reduction of superoxide to hydrogen peroxide. The sequence is that of Superoxide reductase (sorA) from Pyrococcus furiosus (strain ATCC 43587 / DSM 3638 / JCM 8422 / Vc1).